Reading from the N-terminus, the 131-residue chain is Ribonuclease P protein component (131 aa).

This sequence belongs to the RnpA family. As to quaternary structure, consists of a catalytic RNA component (M1 or rnpB) and a protein subunit.

The enzyme catalyses Endonucleolytic cleavage of RNA, removing 5'-extranucleotides from tRNA precursor.. RNaseP catalyzes the removal of the 5'-leader sequence from pre-tRNA to produce the mature 5'-terminus. It can also cleave other RNA substrates such as 4.5S RNA. The protein component plays an auxiliary but essential role in vivo by binding to the 5'-leader sequence and broadening the substrate specificity of the ribozyme. The chain is Ribonuclease P protein component from Cyanothece sp. (strain PCC 7425 / ATCC 29141).